The sequence spans 400 residues: Formate-dependent phosphoribosylglycinamide formyltransferase (400 aa).

N(1)-(5-phospho-beta-D-ribosyl)glycinamide is bound by residues 22–23 (EL) and glutamate 82. ATP contacts are provided by residues arginine 115, lysine 156, 161–166 (SSGKGQ), 196–199 (EGFI), and glutamate 204. The ATP-grasp domain maps to 120–309 (RLAAETLGLP…EFALHARAIL (190 aa)). The Mg(2+) site is built by glutamate 268 and glutamate 280. Residues aspartate 287, lysine 361, and 368 to 369 (RR) each bind N(1)-(5-phospho-beta-D-ribosyl)glycinamide.

This sequence belongs to the PurK/PurT family. In terms of assembly, homodimer.

The enzyme catalyses N(1)-(5-phospho-beta-D-ribosyl)glycinamide + formate + ATP = N(2)-formyl-N(1)-(5-phospho-beta-D-ribosyl)glycinamide + ADP + phosphate + H(+). The protein operates within purine metabolism; IMP biosynthesis via de novo pathway; N(2)-formyl-N(1)-(5-phospho-D-ribosyl)glycinamide from N(1)-(5-phospho-D-ribosyl)glycinamide (formate route): step 1/1. In terms of biological role, involved in the de novo purine biosynthesis. Catalyzes the transfer of formate to 5-phospho-ribosyl-glycinamide (GAR), producing 5-phospho-ribosyl-N-formylglycinamide (FGAR). Formate is provided by PurU via hydrolysis of 10-formyl-tetrahydrofolate. The chain is Formate-dependent phosphoribosylglycinamide formyltransferase from Xanthomonas campestris pv. campestris (strain 8004).